Reading from the N-terminus, the 524-residue chain is Sexual development regulator velC (524 aa).

Disordered regions lie at residues 114–195, 322–349, 380–413, and 503–524; these read NRVL…PVHS, PGSGSGAGSSDTNTNSNDKSRHESMSSY, VDEEPDPNTAPAHPSSTDDSTYDASPRTVTHRFR, and GMGKGRRVGIGSSKVSSRARVE. Polar residues-rich tracts occupy residues 131-153 and 178-195; these read TTGSLAQYSIQRPSTSRNMENAG and LDSQYSGSTTAFPSPVHS. The region spanning 248–500 is the Velvet domain; sequence SSSSRYRLFI…ELGFVELKTR (253 aa). The segment covering 393–402 has biased composition (polar residues); the sequence is PSSTDDSTYD.

This sequence belongs to the velvet family. VelC subfamily. As to quaternary structure, interacts with vosA.

It is found in the nucleus. In terms of biological role, velvet-domain-containing protein that acts as a positive regulator of sexual development. Positively regulates the production of the sexual fruiting bodies called cleistothecia. The sequence is that of Sexual development regulator velC from Emericella nidulans (strain FGSC A4 / ATCC 38163 / CBS 112.46 / NRRL 194 / M139) (Aspergillus nidulans).